The sequence spans 718 residues: Myeloperoxidase (718 aa).

A signal peptide spans 1–15; it reads MKLLLALAGLLAPLA. The propeptide occupies 16–138; it reads MLQTSNGATP…SSGCAYQDVR (123 aa). The N-linked (GlcNAc...) asparagine glycan is linked to Asn-113. Cysteines 141 and 154 form a disulfide. Asp-234 contacts heme b. His-235 functions as the Proton acceptor in the catalytic mechanism. Asp-236 is a binding site for Ca(2+). Cystine bridges form between Cys-255–Cys-265 and Cys-259–Cys-283. Cys-290 bears the Cysteine sulfenic acid (-SOH) mark. Residue Asn-297 is glycosylated (N-linked (GlcNAc...) asparagine). The Ca(2+) site is built by Thr-308, Phe-310, Asp-312, and Ser-314. 2 N-linked (GlcNAc...) asparagine glycosylation sites follow: Asn-329 and Asn-365. Cys-361 and Cys-372 form a disulfide bridge. 2 residues coordinate heme b: Glu-382 and Met-383. A glycan (N-linked (GlcNAc...) asparagine) is linked at Asn-457. His-476 is a binding site for heme b. Disulfide bonds link Cys-580/Cys-637 and Cys-678/Cys-704. Asn-711 carries N-linked (GlcNAc...) asparagine glycosylation.

This sequence belongs to the peroxidase family. XPO subfamily. In terms of assembly, homodimer; disulfide-linked. Each monomer consists of a light and a heavy chain. Found in a complex with CP and LTF; interacts directly with CP, which protects CP antioxidant properties by MPO. Ca(2+) serves as cofactor. Heme b is required as a cofactor.

The protein localises to the lysosome. The catalysed reaction is chloride + H2O2 + H(+) = hypochlorous acid + H2O. Functionally, part of the host defense system of polymorphonuclear leukocytes. It is responsible for microbicidal activity against a wide range of organisms. In the stimulated PMN, MPO catalyzes the production of hypohalous acids, primarily hypochlorous acid in physiologic situations, and other toxic intermediates that greatly enhance PMN microbicidal activity. Mediates the proteolytic cleavage of alpha-1-microglobulin to form t-alpha-1-microglobulin, which potently inhibits oxidation of low density lipoprotein particles and limits vascular damage. This Mus musculus (Mouse) protein is Myeloperoxidase (Mpo).